A 488-amino-acid polypeptide reads, in one-letter code: Ribulose bisphosphate carboxylase large chain (488 aa).

Substrate-binding residues include N127 and T177. Catalysis depends on K179, which acts as the Proton acceptor. K181 contacts substrate. The Mg(2+) site is built by K205, D207, and E208. The residue at position 205 (K205) is an N6-carboxylysine. Catalysis depends on H297, which acts as the Proton acceptor. Substrate is bound by residues R298, H330, and S382.

This sequence belongs to the RuBisCO large chain family. Type I subfamily. As to quaternary structure, heterohexadecamer of 8 large chains and 8 small chains. It depends on Mg(2+) as a cofactor.

The protein resides in the plastid. It localises to the chloroplast. It carries out the reaction 2 (2R)-3-phosphoglycerate + 2 H(+) = D-ribulose 1,5-bisphosphate + CO2 + H2O. It catalyses the reaction D-ribulose 1,5-bisphosphate + O2 = 2-phosphoglycolate + (2R)-3-phosphoglycerate + 2 H(+). Its function is as follows. RuBisCO catalyzes two reactions: the carboxylation of D-ribulose 1,5-bisphosphate, the primary event in carbon dioxide fixation, as well as the oxidative fragmentation of the pentose substrate in the photorespiration process. Both reactions occur simultaneously and in competition at the same active site. The sequence is that of Ribulose bisphosphate carboxylase large chain (rbcL) from Pyropia dentata (Red alga).